We begin with the raw amino-acid sequence, 101 residues long: Small ribosomal subunit protein uS14 (101 aa).

The protein belongs to the universal ribosomal protein uS14 family. In terms of assembly, part of the 30S ribosomal subunit. Contacts proteins S3 and S10.

Binds 16S rRNA, required for the assembly of 30S particles and may also be responsible for determining the conformation of the 16S rRNA at the A site. The chain is Small ribosomal subunit protein uS14 from Cupriavidus metallidurans (strain ATCC 43123 / DSM 2839 / NBRC 102507 / CH34) (Ralstonia metallidurans).